We begin with the raw amino-acid sequence, 430 residues long: Bone morphogenetic protein 7 (430 aa).

The signal sequence occupies residues 1–29 (MHVRSLRAAAPHSFVALWAPLFLLRSALA). Residues 30-291 (DFSLDNEVHS…ATEVHLRSIR (262 aa)) constitute a propeptide that is removed on maturation. 4 N-linked (GlcNAc...) asparagine glycosylation sites follow: N186, N301, N320, and N371. The tract at residues 290-310 (IRSTGGKQRSQNRSKTPKNQE) is disordered. Disulfide bonds link C329–C395, C358–C427, and C362–C429.

Belongs to the TGF-beta family. Homodimer; disulfide-linked. Interacts with SOSTDC1. Interacts with TWSG1. Interacts with FBN1 (via N-terminal domain) and FBN2. Interacts with type I receptor ACVR1. Interacts with type II receptor ACVR2A. Interacts with NOG; this interaction inhibits canonical BMP signaling. Interacts with SCUBE3. Interacts with ERFE; the interaction inhibits BMP-induced transcription of HAMP. Interacts with TGFBR3.

Its subcellular location is the secreted. In terms of biological role, growth factor of the TGF-beta superfamily that plays important role in various biological processes, including embryogenesis, hematopoiesis, neurogenesis and skeletal morphogenesis. Initiates the canonical BMP signaling cascade by associating with type I receptor ACVR1 and type II receptor ACVR2A. Once all three components are bound together in a complex at the cell surface, ACVR2A phosphorylates and activates ACVR1. In turn, ACVR1 propagates signal by phosphorylating SMAD1/5/8 that travel to the nucleus and act as activators and repressors of transcription of target genes. For specific functions such as growth cone collapse in developing spinal neurons and chemotaxis of monocytes, also uses BMPR2 as type II receptor. Can also signal through non-canonical pathways such as P38 MAP kinase signaling cascade that promotes brown adipocyte differentiation through activation of target genes, including members of the SOX family of transcription factors. Promotes the expression of HAMP, this is repressed by its interaction with ERFE. This is Bone morphogenetic protein 7 (Bmp7) from Mus musculus (Mouse).